The following is a 105-amino-acid chain: MYAVLVTGGKQYRVAQGEKLRIEKLEVEVGSEIKFDNILLLGDSDGIKIGDALSGAAVTATVLSQGRADKVRIIKFRRRKHHMKRQGHRQYYTEIEITGIAGGSK.

This sequence belongs to the bacterial ribosomal protein bL21 family. Part of the 50S ribosomal subunit. Contacts protein L20.

In terms of biological role, this protein binds to 23S rRNA in the presence of protein L20. This is Large ribosomal subunit protein bL21 from Stenotrophomonas maltophilia (strain R551-3).